The following is a 138-amino-acid chain: MRTLWIVAVCLMGVEGHLTQFGDMINKKTGTFGLLSYVYYGCYCGLGGKGKPQDATDRCCFVHDCCYGTVNGCDPKLSTYSYSFQNGDIVCGDDDPCLRAVCECDRVAAICFGENMNTYDKKYMLYSLFDCMEESEKC.

Positions 1 to 16 are cleaved as a signal peptide; the sequence is MRTLWIVAVCLMGVEG. Intrachain disulfides connect cysteine 42-cysteine 131, cysteine 44-cysteine 60, cysteine 59-cysteine 111, cysteine 65-cysteine 138, cysteine 66-cysteine 104, cysteine 73-cysteine 97, and cysteine 91-cysteine 102. 3 residues coordinate Ca(2+): tyrosine 43, glycine 45, and glycine 47. Histidine 63 is a catalytic residue. Residue aspartate 64 participates in Ca(2+) binding. The short motif at 86–88 is the May inhibit integrin function (Atypical cell attachment site) element; it reads NGD. Residue aspartate 105 is part of the active site.

This sequence belongs to the phospholipase A2 family. Group II subfamily. D49 sub-subfamily. Requires Ca(2+) as cofactor. As to expression, expressed by the venom gland.

The protein resides in the secreted. The catalysed reaction is a 1,2-diacyl-sn-glycero-3-phosphocholine + H2O = a 1-acyl-sn-glycero-3-phosphocholine + a fatty acid + H(+). In terms of biological role, snake venom phospholipase A2 (PLA2) that displays an inhibitory effect, independent from its catalytic activity, on tumor cell adhesion and migration. This effect is mediated via specific inhibition of integrins alpha-5/beta-1 (ITGA5/ITGB1), alpha-v/beta-3 (ITGAV/ITGB3) and alpha-v/beta-6 (ITGAV/ITGB6). PLA2 catalyzes the calcium-dependent hydrolysis of the 2-acyl groups in 3-sn-phosphoglycerides. The chain is Acidic phospholipase A2 MVL-PLA2 from Macrovipera lebetina transmediterranea (Blunt-nosed viper).